Here is a 323-residue protein sequence, read N- to C-terminus: Probable cell division protein WhiA (323 aa).

The H-T-H motif DNA-binding region spans 275 to 309 (TLKELGEMLTTGQVSKSGINHRLRKLDQIAERLRS).

This sequence belongs to the WhiA family.

Functionally, involved in cell division and chromosome segregation. The sequence is that of Probable cell division protein WhiA from Listeria monocytogenes serotype 4b (strain CLIP80459).